Reading from the N-terminus, the 2185-residue chain is MGAQVSTQKTGAHETGLRASGNSIIHYTNINYYKDAASNSANRQEFAQDPGKFTEPVKDIMIKSMPALNSPSAEECGYSDRVRSITLGNSTITTQECANVVVGYGTWPTYLKDEEATAEDQPTQPDVATCRFYTLESVMWQQSSPGWWWKFPDALSNMGLFGQNMQYHYLGRAGYTVHVQCNASKFHQGCLLVVCVPEAEMGCATLANKPDQKSLSNGETANTFDSQNTTGQTAVQANVINAGMGVGVGNLTIFPHQWINLRTNNSATIVMPYINSVPMDNMFRHNNFTLMIIPFAPLSYSTGATTYVPITVTVAPMCAEYNGLRLAGKQGLPTMLTPGSNQFLTSDDFQSPSAMPQFDVTPEMAIPGQVNNLMEIAEVDSVVPVNNTEGKVSSIEAYQIPVQSNSTNGSQVFGFPLIPGASSVLNRTLLGEILNYYTHWSGSIKLTFMFCGSAMATGKFLLAYSPPGAGAPTTRKEAMLGTHVIWDVGLQSSCVLCIPWISQTHYRYVVVDEYTAGGYITCWYQTNIVVPADTQSDCKILCFVSACNDFSVRMLKDTPFIKQDSFYQGPPGEAVERAIARVADTISSGPVNSESIPALTAAETGHTSQVVPADTMQTRHVKNYHSRSESTVENFLCRSACVYYTTYKNHGTDGDNFAYWVINTRQVAQLRRKLEMFTYARFDLELTFVITSTQEQSTIQGQDSPVLTHQIMYVPPGGPVPTKINSYSWQTSTNPSVFWTEGSAPPRISIPFISIGNAYSMFYDGWAKFDKQGTYGINTLNNMGTLYMRHVNDGSPGPIVSTVRIYFKPKHVKTWVPRPPRLCQYQKAGNVNFEPTGVTESRTEITAMQTTGVLGQQTGAICIGNYRVVNRHLATSEDWQRCVWEDYNRDLLVSTTTAHGCDTIARCRCSTGVYFCASRNKHYPVSFEGPGLVEVQESEYYPKRYQSHVLLAAGFSEPGDCGGILRCEHGVIGLVTMGGEGVVGFADVRDLLWLEDDAMEQGVKDYVEQLGNAFGSGFTNQICEQVNLLKESLVGQDSILEKSLKALVKIISALVIVVRNHDDLVTITATLALIGCTSSPWRWLKQKVSQYYGIPMAERQNNNWLKKFTEMTNACKGMEWIAVKIQKFIDWLKVKILPEVKEKHEFLNRLKQLPLLESQIATIEQSAPSQSDQEQLFSNVQYFAHYCRKYAPLYAAEAKRVFSLEKKMSNYIQFKSKCRIEPVCLLLHGSPGAGKSVATNLIGRSLAEKLNSSVYSLPPDPDHFDGYKQQAVVIMDDLCQNPDGGDISLFCQMVSSVDFVPPMAALEEKGILFTSPFVLASTNAGSINAPTVSDSRALARRFHFDMNIEVISMYSQNGKINMPMSVRTCDEECCPVNFKRCCPLVCGKAIQFIDRRTQVRYSLDMLVTEMFREYNHRHSVGATLEALFQGPPIYREIKISVAPDTPPPPAIADLLKSVDSEAVREYCREKGWLVPEINSTLQIEKHVSRAFICLQALTTFVSVAGIIYIIYKLFAGFQGAYTGMPNQKPKVPTLRQAKVQGPAFEFAVAMMKRNSSTVKTEYGEFTMLGIYDRWAVLPRHAKPGPTILMNDQEVGVVDAKELVDKDGTNLELTLLKLSRNEKFRDIRGFLAKEEVEVNEAVLAINTSKFPNMYIPVGQVTDYGFLNLGGTPTKRMLMYNFPTRAGQCGGVLMSTGKVLGIHVGGNGHQGFSAALLKHYFNDEQGEIEFIESSKEAGLPVINTPSKTKLEPSVFHQVFEGNKEPAVLRNGDPRLKANFEEAIFSKYIGNVNTHVDEYMLEAVDHYAGQLATLDISTEPMKLEDAVYGTEGLEALDLTTSAGYPYVALGIKKRDILSKKTKDLTKLKECMDKYGLNLPMVTYVKDELRSAEKVAKGKSRLIEASSLNDSVAMRQTFGNLYKTFHLNPGIVTGSAVGCDPDLFWSKIPVLLDGHLIAFDYSGYDASLSPVWFACLKLLLEKLGYTHKETNYIDYLCNSHHLYRDKHYFVRGGMPSGCSGTSIFNSMINNIIIRTLMLKVYKGIDLDQFRMIAYGDDVIASYPWPIDASLLAEAGKDYGLIMTPADKGECFNEVTWTNVTFLKRYFRADEQYPFLVHPVMPMKDIHESIRWTKDPKNTQDHVRSLCLLAWHNGEHEYEEFIKKIRSVPVGRCLTLPAFSTLRRKWLDSF.

G2 carries the N-myristoyl glycine; by host lipid modification. The Cytoplasmic portion of the chain corresponds to 2-1495; sequence GAQVSTQKTG…HVSRAFICLQ (1494 aa). Residues 566–582 form an amphipathic alpha-helix region; that stretch reads FYQGPPGEAVERAIARV. Catalysis depends on for protease 2A activity residues H872 and D890. Zn(2+) is bound by residues C907 and C909. The active-site For protease 2A activity is C961. The Zn(2+) site is built by C967 and H969. The segment at 1101 to 1173 is membrane-binding; sequence NNNWLKKFTE…EQSAPSQSDQ (73 aa). The interval 1101–1239 is oligomerization; that stretch reads NNNWLKKFTE…SPGAGKSVAT (139 aa). Positions 1122–1126 are RNA-binding; the sequence is AVKIQ. One can recognise an SF3 helicase domain in the interval 1205–1361; that stretch reads EKKMSNYIQF…SMYSQNGKIN (157 aa). Zn(2+) contacts are provided by C1369, C1381, and C1386. The segment at 1369–1386 adopts a C4-type; degenerate zinc-finger fold; the sequence is CDEECCPVNFKRCCPLVC. An RNA-binding region spans residues 1413–1420; that stretch reads EYNHRHSV. An oligomerization region spans residues 1424–1429; the sequence is LEALFQ. An intramembrane segment occupies 1496–1511; sequence ALTTFVSVAGIIYIIY. Over 1512 to 2185 the chain is Cytoplasmic; the sequence is KLFAGFQGAY…TLRRKWLDSF (674 aa). Position 1521 is an O-(5'-phospho-RNA)-tyrosine (Y1521). A Peptidase C3 domain is found at 1541–1719; it reads GPAFEFAVAM…FSAALLKHYF (179 aa). Catalysis depends on for protease 3C activity residues H1580, E1611, and C1687. Residues 1950 to 2066 enclose the RdRp catalytic domain; the sequence is GHLIAFDYSG…SYPWPIDASL (117 aa). 2 residues coordinate Mg(2+): D1956 and D2052.

Belongs to the picornaviruses polyprotein family. Interacts with capsid protein VP1 and capsid protein VP3 to form heterotrimeric protomers. As to quaternary structure, interacts with capsid protein VP0, and capsid protein VP3 to form heterotrimeric protomers. Five protomers subsequently associate to form pentamers which serve as building blocks for the capsid. Interacts with capsid protein VP2, capsid protein VP3 and capsid protein VP4 following cleavage of capsid protein VP0. In terms of assembly, interacts with capsid protein VP1 and capsid protein VP3 in the mature capsid. Interacts with capsid protein VP0 and capsid protein VP1 to form heterotrimeric protomers. Five protomers subsequently associate to form pentamers which serve as building blocks for the capsid. Interacts with capsid protein VP4 in the mature capsid. Interacts with protein 2C; this interaction may be important for virion morphogenesis. As to quaternary structure, interacts with capsid protein VP1 and capsid protein VP3. In terms of assembly, homodimer. Homohexamer; forms a hexameric ring structure with 6-fold symmetry characteristic of AAA+ ATPases. Interacts (via N-terminus) with host RTN3 (via reticulon domain); this interaction is important for viral replication. Interacts with capsid protein VP3; this interaction may be important for virion morphogenesis. As to quaternary structure, interacts with protein 3CD. In terms of assembly, homodimer. Interacts with host GBF1. Interacts (via GOLD domain) with host ACBD3 (via GOLD domain); this interaction allows the formation of a viral protein 3A/ACBD3 heterotetramer with a 2:2 stoichiometry, which will stimulate the recruitment of host PI4KB in order to synthesize PI4P at the viral RNA replication sites. Interacts with RNA-directed RNA polymerase. As to quaternary structure, interacts with protein 3AB and with RNA-directed RNA polymerase. In terms of assembly, interacts with Viral protein genome-linked and with protein 3CD. Mg(2+) serves as cofactor. Post-translationally, specific enzymatic cleavages in vivo by the viral proteases yield processing intermediates and the mature proteins. Myristoylation is required for the formation of pentamers during virus assembly. Further assembly of 12 pentamers and a molecule of genomic RNA generates the provirion. In terms of processing, during virion maturation, immature virions are rendered infectious following cleavage of VP0 into VP4 and VP2. This maturation seems to be an autocatalytic event triggered by the presence of RNA in the capsid and it is followed by a conformational change infectious virion. Post-translationally, myristoylation is required during RNA encapsidation and formation of the mature virus particle. VPg is uridylylated by the polymerase into VPg-pUpU. This acts as a nucleotide-peptide primer for the genomic RNA replication.

The protein localises to the virion. Its subcellular location is the host cytoplasm. It localises to the host cytoplasmic vesicle membrane. The protein resides in the host nucleus. The enzyme catalyses a ribonucleoside 5'-triphosphate + H2O = a ribonucleoside 5'-diphosphate + phosphate + H(+). The catalysed reaction is Selective cleavage of Tyr-|-Gly bond in the picornavirus polyprotein.. It catalyses the reaction RNA(n) + a ribonucleoside 5'-triphosphate = RNA(n+1) + diphosphate. It carries out the reaction Selective cleavage of Gln-|-Gly bond in the poliovirus polyprotein. In other picornavirus reactions Glu may be substituted for Gln, and Ser or Thr for Gly.. Replication or transcription is subject to high level of random mutations by the nucleotide analog ribavirin. Functionally, forms an icosahedral capsid of pseudo T=3 symmetry with capsid proteins VP2 and VP3. The capsid is 300 Angstroms in diameter, composed of 60 copies of each capsid protein and enclosing the viral positive strand RNA genome. Capsid protein VP1 mainly forms the vertices of the capsid. Capsid protein VP1 interacts with host cell receptor to provide virion attachment to target host cells. This attachment induces virion internalization. Tyrosine kinases are probably involved in the entry process. After binding to its receptor, the capsid undergoes conformational changes. Capsid protein VP1 N-terminus (that contains an amphipathic alpha-helix) and capsid protein VP4 are externalized. Together, they shape a pore in the host membrane through which viral genome is translocated to host cell cytoplasm. Its function is as follows. Forms an icosahedral capsid of pseudo T=3 symmetry with capsid proteins VP2 and VP3. The capsid is 300 Angstroms in diameter, composed of 60 copies of each capsid protein and enclosing the viral positive strand RNA genome. Lies on the inner surface of the capsid shell. After binding to the host receptor, the capsid undergoes conformational changes. Capsid protein VP4 is released, Capsid protein VP1 N-terminus is externalized, and together, they shape a pore in the host membrane through which the viral genome is translocated into the host cell cytoplasm. In terms of biological role, component of immature procapsids, which is cleaved into capsid proteins VP4 and VP2 after maturation. Allows the capsid to remain inactive before the maturation step. Functionally, cysteine protease that cleaves viral polyprotein and specific host proteins. It is responsible for the autocatalytic cleavage between the P1 and P2 regions, which is the first cleavage occurring in the polyprotein. Also cleaves the host translation initiation factor EIF4G1, in order to shut down the capped cellular mRNA translation. Inhibits the host nucleus-cytoplasm protein and RNA trafficking by cleaving host members of the nuclear pores. Counteracts stress granule formation probably by antagonizing its assembly or promoting its dissassembly. Cleaves and inhibits host IFIH1/MDA5, thereby inhibiting the type-I IFN production and the establishment of the antiviral state. Cleaves and inhibits host MAVS, thereby inhibiting the type-I IFN production and the establishment of the antiviral state. Its function is as follows. Plays an essential role in the virus replication cycle by acting as a viroporin. Creates a pore in the host endoplasmic reticulum and as a consequence releases Ca2+ in the cytoplasm of infected cell. In turn, high levels of cytoplasmic calcium may trigger membrane trafficking and transport of viral ER-associated proteins to viroplasms, sites of viral genome replication. Induces and associates with structural rearrangements of intracellular membranes. Displays RNA-binding, nucleotide binding and NTPase activities. May play a role in virion morphogenesis and viral RNA encapsidation by interacting with the capsid protein VP3. In terms of biological role, localizes the viral replication complex to the surface of membranous vesicles. Together with protein 3CD binds the Cis-Active RNA Element (CRE) which is involved in RNA synthesis initiation. Acts as a cofactor to stimulate the activity of 3D polymerase, maybe through a nucleid acid chaperone activity. Functionally, localizes the viral replication complex to the surface of membranous vesicles. It inhibits host cell endoplasmic reticulum-to-Golgi apparatus transport and causes the disassembly of the Golgi complex, possibly through GBF1 interaction. This would result in depletion of MHC, trail receptors and IFN receptors at the host cell surface. Plays an essential role in viral RNA replication by recruiting ACBD3 and PI4KB at the viral replication sites, thereby allowing the formation of the rearranged membranous structures where viral replication takes place. Its function is as follows. Acts as a primer for viral RNA replication and remains covalently bound to viral genomic RNA. VPg is uridylylated prior to priming replication into VPg-pUpU. The oriI viral genomic sequence may act as a template for this. The VPg-pUpU is then used as primer on the genomic RNA poly(A) by the RNA-dependent RNA polymerase to replicate the viral genome. During genome replication, the VPg-RNA linkage is removed by the host TDP2, thereby accelerating replication. During the late stage of the replication cycle, host TDP2 is excluded from sites of viral RNA synthesis and encapsidation, allowing for the generation of progeny virions. Involved in the viral replication complex and viral polypeptide maturation. It exhibits protease activity with a specificity and catalytic efficiency that is different from protease 3C. Protein 3CD lacks polymerase activity. Protein 3CD binds to the 5'UTR of the viral genome. In terms of biological role, replicates the viral genomic RNA on the surface of intracellular membranes. May form linear arrays of subunits that propagate along a strong head-to-tail interaction called interface-I. Covalently attaches UMP to a tyrosine of VPg, which is used to prime RNA synthesis. The positive stranded RNA genome is first replicated at virus induced membranous vesicles, creating a dsRNA genomic replication form. This dsRNA is then used as template to synthesize positive stranded RNA genomes. ss(+)RNA genomes are either translated, replicated or encapsidated. Functionally, major viral protease that mediates proteolytic processing of the polyprotein. Cleaves host EIF5B, contributing to host translation shutoff. Also cleaves host PABPC1, contributing to host translation shutoff. Cleaves host NLRP1, triggers host N-glycine-mediated degradation of the autoinhibitory NLRP1 N-terminal fragment. In Homo sapiens (Human), this protein is Genome polyprotein.